We begin with the raw amino-acid sequence, 613 residues long: Myosin light chain kinase 2, skeletal/cardiac muscle (613 aa).

A compositionally biased stretch (polar residues) spans 1–20 (MTTENGAVELGSQSLSTEQT). Residues 1–168 (MTTENGAVEL…RGSPAFLHSP (168 aa)) form a disordered region. The segment covering 32–55 (SEKEPSAPATEKDLSPPNAKKDPG) has biased composition (basic and acidic residues). Pro residues predominate over residues 56 to 66 (APDPKNNPDPP). Residues 67–83 (SLKKDPAKAPGPEKKGD) show a composition bias toward basic and acidic residues. Over residues 95–105 (SGEGDGGGGPA) the composition is skewed to gly residues. Low complexity predominate over residues 106-122 (EGSEGPPAALPLPTATA). Over residues 145–158 (KAGKKAAECREAGR) the composition is skewed to basic and acidic residues. Phosphoserine occurs at positions 161, 167, and 169. Residues 219-240 (EKKKEEAEKASGQAGQAKVQGD) form a disordered region. One can recognise a Protein kinase domain in the interval 302 to 557 (MNSKEALGGG…AEQCLAHPWL (256 aa)). Residues 308 to 316 (LGGGKFGAV) and Lys331 each bind ATP. The Proton acceptor role is filled by Asp423. Position 462 is a phosphothreonine (Thr462). A calmodulin-binding region spans residues 591–603 (IAVSAANRFKKIS).

It belongs to the protein kinase superfamily. CAMK Ser/Thr protein kinase family. As to quaternary structure, may interact with centrin.

It localises to the cytoplasm. The catalysed reaction is L-seryl-[myosin light chain] + ATP = O-phospho-L-seryl-[myosin light chain] + ADP + H(+). The enzyme catalyses L-threonyl-[myosin light chain] + ATP = O-phospho-L-threonyl-[myosin light chain] + ADP + H(+). Its function is as follows. Implicated in the level of global muscle contraction and cardiac function. Phosphorylates a specific serine in the N-terminus of a myosin light chain. The chain is Myosin light chain kinase 2, skeletal/cardiac muscle (Mylk2) from Mus musculus (Mouse).